Consider the following 666-residue polypeptide: Endogenous retrovirus group K member 21 Gag polyprotein (666 aa).

Glycine 2 carries the N-myristoyl glycine lipid modification. Disordered regions lie at residues 165–189 and 217–264; these read GKGP…AGQV and ELQY…GSEL. Pro residues predominate over residues 232–247; that stretch reads GMPPAPQGRAPYPQPP. 2 CCHC-type zinc fingers span residues 544-561 and 580-597; these read GKCY…NCPV and DLCP…QCRS. The tract at residues 598–641 is disordered; that stretch reads KFDKNGQPLSGNEQRGQPQAPQQTGAFPIQPFVPQGFQGQQPPL. Residues 604–622 show a composition bias toward polar residues; the sequence is QPLSGNEQRGQPQAPQQTG. Residues 624–640 show a composition bias toward low complexity; it reads FPIQPFVPQGFQGQQPP.

Belongs to the beta type-B retroviral Gag protein family. HERV class-II K(HML-2) gag subfamily. In terms of processing, myristoylation is essential for retroviral assembly. Alteration of the glycine residue leads to a block in the budding of particles and an accumulation of Gag inside the cell. Specific enzymatic cleavages may yield mature proteins.

The protein resides in the cell membrane. In terms of biological role, the products of the Gag polyproteins of infectious retroviruses perform highly complex orchestrated tasks during the assembly, budding, maturation, and infection stages of the viral replication cycle. During viral assembly, the proteins form membrane associations and self-associations that ultimately result in budding of an immature virion from the infected cell. Gag precursors also function during viral assembly to selectively bind and package two plus strands of genomic RNA. Endogenous Gag proteins may have kept, lost or modified their original function during evolution. The polypeptide is Endogenous retrovirus group K member 21 Gag polyprotein (ERVK-21) (Homo sapiens (Human)).